Reading from the N-terminus, the 347-residue chain is S-adenosylmethionine:tRNA ribosyltransferase-isomerase (347 aa).

The protein belongs to the QueA family. Monomer.

It localises to the cytoplasm. It carries out the reaction 7-aminomethyl-7-carbaguanosine(34) in tRNA + S-adenosyl-L-methionine = epoxyqueuosine(34) in tRNA + adenine + L-methionine + 2 H(+). The protein operates within tRNA modification; tRNA-queuosine biosynthesis. Functionally, transfers and isomerizes the ribose moiety from AdoMet to the 7-aminomethyl group of 7-deazaguanine (preQ1-tRNA) to give epoxyqueuosine (oQ-tRNA). The polypeptide is S-adenosylmethionine:tRNA ribosyltransferase-isomerase (Bordetella bronchiseptica (strain ATCC BAA-588 / NCTC 13252 / RB50) (Alcaligenes bronchisepticus)).